Consider the following 346-residue polypeptide: Small ribosomal subunit biogenesis GTPase RsgA (346 aa).

Residues 1 to 26 (MAKRKLTQNQTRRIQSNNAKTLHRHK) are disordered. Over residues 7 to 20 (TQNQTRRIQSNNAK) the composition is skewed to polar residues. The 169-residue stretch at 103 to 271 (ENEISRPDYY…LIDSPGIREF (169 aa)) folds into the CP-type G domain. GTP is bound by residues 159–162 (NKVD) and 213–221 (GQSGVGKSS). Zn(2+)-binding residues include C295, C300, H302, and C308.

Belongs to the TRAFAC class YlqF/YawG GTPase family. RsgA subfamily. As to quaternary structure, monomer. Associates with 30S ribosomal subunit, binds 16S rRNA. Zn(2+) is required as a cofactor.

Its subcellular location is the cytoplasm. Functionally, one of several proteins that assist in the late maturation steps of the functional core of the 30S ribosomal subunit. Helps release RbfA from mature subunits. May play a role in the assembly of ribosomal proteins into the subunit. Circularly permuted GTPase that catalyzes slow GTP hydrolysis, GTPase activity is stimulated by the 30S ribosomal subunit. This is Small ribosomal subunit biogenesis GTPase RsgA from Haemophilus influenzae (strain 86-028NP).